A 241-amino-acid chain; its full sequence is ATP phosphoribosyltransferase (241 aa).

It belongs to the ATP phosphoribosyltransferase family. Short subfamily. Heteromultimer composed of HisG and HisZ subunits.

It localises to the cytoplasm. It carries out the reaction 1-(5-phospho-beta-D-ribosyl)-ATP + diphosphate = 5-phospho-alpha-D-ribose 1-diphosphate + ATP. It participates in amino-acid biosynthesis; L-histidine biosynthesis; L-histidine from 5-phospho-alpha-D-ribose 1-diphosphate: step 1/9. Catalyzes the condensation of ATP and 5-phosphoribose 1-diphosphate to form N'-(5'-phosphoribosyl)-ATP (PR-ATP). Has a crucial role in the pathway because the rate of histidine biosynthesis seems to be controlled primarily by regulation of HisG enzymatic activity. The protein is ATP phosphoribosyltransferase of Gluconobacter oxydans (strain 621H) (Gluconobacter suboxydans).